We begin with the raw amino-acid sequence, 262 residues long: Enoyl-[acyl-carrier-protein] reductase [NADH] FabI (262 aa).

Residues Gly-13, 19–20 (SI), Gln-40, 64–65 (DV), and Ile-92 each bind NAD(+). Substrate is bound at residue Ala-95. Residues Tyr-146 and Tyr-156 each act as proton acceptor in the active site. Residues Lys-163 and 192–196 (IRTLA) each bind NAD(+).

Belongs to the short-chain dehydrogenases/reductases (SDR) family. FabI subfamily. As to quaternary structure, homotetramer.

It catalyses the reaction a 2,3-saturated acyl-[ACP] + NAD(+) = a (2E)-enoyl-[ACP] + NADH + H(+). The catalysed reaction is (2E)-butenoyl-[ACP] + NADH + H(+) = butanoyl-[ACP] + NAD(+). It carries out the reaction (2E)-decenoyl-[ACP] + NADH + H(+) = decanoyl-[ACP] + NAD(+). The enzyme catalyses (2E)-hexadecenoyl-[ACP] + NADH + H(+) = hexadecanoyl-[ACP] + NAD(+). It catalyses the reaction (2E,9Z)-hexadecadienoyl-[ACP] + NADH + H(+) = (9Z)-hexadecenoyl-[ACP] + NAD(+). The catalysed reaction is (2E)-5-methylhexenoyl-[ACP] + NADH + H(+) = 5-methylhexanoyl-[ACP] + NAD(+). The protein operates within lipid metabolism; fatty acid biosynthesis. It participates in cofactor biosynthesis; biotin biosynthesis. Inhibited by diazaborines, triclosan (5-chloro-2-2,4-dichlorophenoxyphenol), 1,4-disubstituted imidazoles, 1,4-benzodiazepine derivatives, naphthyridinone derivatives, luteolin and curcumin. The antibiotic diazaborine interferes with the activity by binding to the protein and NAD. In terms of biological role, catalyzes the reduction of a carbon-carbon double bond in an enoyl moiety that is covalently linked to an acyl carrier protein (ACP). Involved in the elongation cycle of fatty acid which are used in the lipid metabolism and in the biotin biosynthesis. In Escherichia coli (strain K12), this protein is Enoyl-[acyl-carrier-protein] reductase [NADH] FabI (fabI).